Consider the following 341-residue polypeptide: Phenylalanine--tRNA ligase alpha subunit (341 aa).

Mg(2+) is bound at residue glutamate 256.

This sequence belongs to the class-II aminoacyl-tRNA synthetase family. Phe-tRNA synthetase alpha subunit type 1 subfamily. In terms of assembly, tetramer of two alpha and two beta subunits. The cofactor is Mg(2+).

It is found in the cytoplasm. It catalyses the reaction tRNA(Phe) + L-phenylalanine + ATP = L-phenylalanyl-tRNA(Phe) + AMP + diphosphate + H(+). In Chlamydia muridarum (strain MoPn / Nigg), this protein is Phenylalanine--tRNA ligase alpha subunit (pheS).